Consider the following 650-residue polypeptide: Probable basic-leucine zipper transcription factor K (650 aa).

Residues 37-180 (IDNNNNNYSN…KQQKQQQQEQ (144 aa)) adopt a coiled-coil conformation. Disordered regions lie at residues 109–130 (IPQQQQQEQDQQEDQDQEQEQE) and 242–279 (TTLNTNLQSDNNNNNNNNNNNNNNNNNNNNNNNNNNNL). Residues 118-129 (DQQEDQDQEQEQ) show a composition bias toward acidic residues. Over residues 242–251 (TTLNTNLQSD) the composition is skewed to polar residues. Low complexity predominate over residues 252 to 278 (NNNNNNNNNNNNNNNNNNNNNNNNNNN). The stretch at 259 to 286 (NNNNNNNNNNNNNNNNNNNNLLNEKQIE) forms a coiled coil. Residues 305–368 (FNKIEKGKRN…IEIMRSEPES (64 aa)) form the bZIP domain. A basic motif region spans residues 307–327 (KIEKGKRNQTESSKNFRERKK). A leucine-zipper region spans residues 330-337 (IKDIELKL). The span at 452–466 (NNNNNNNNNNNNNNN) shows a compositional bias: low complexity. A disordered region spans residues 452 to 473 (NNNNNNNNNNNNNNNDNDDDNE).

This sequence belongs to the bZIP family.

The protein resides in the nucleus. Functionally, probable transcriptional regulator. The chain is Probable basic-leucine zipper transcription factor K (bzpK) from Dictyostelium discoideum (Social amoeba).